Reading from the N-terminus, the 566-residue chain is Phosphatidylinositol 4-kinase gamma 4 (566 aa).

Ubiquitin-like domains follow at residues 34-111 (TIMI…SDLQ) and 112-190 (VLDV…AKVR). Over residues 250 to 263 (DGLKSGNSPVRSSE) the composition is skewed to polar residues. Positions 250–272 (DGLKSGNSPVRSSEGTGGAYFMQ) are disordered. A PI3K/PI4K catalytic domain is found at 255-547 (GNSPVRSSEG…AVLPGTSEAA (293 aa)). The tract at residues 261–267 (SSEGTGG) is G-loop. ATP-binding positions include 262–268 (SEGTGGA), Lys-284, and 374–377 (QMFT). The segment at 407–415 (ANADRHGGN) is catalytic loop. The interval 430–456 (PIDHGYCLPESFEDCTFEWLYWPQARK) is activation loop. Asp-432 contacts ATP.

Belongs to the PI3/PI4-kinase family. Type II PI4K subfamily. As to quaternary structure, interacts with RPN10, UFD1 and CDC48 in vitro. Autophosphorylated.

It localises to the membrane. The catalysed reaction is a 1,2-diacyl-sn-glycero-3-phospho-(1D-myo-inositol) + ATP = a 1,2-diacyl-sn-glycero-3-phospho-(1D-myo-inositol 4-phosphate) + ADP + H(+). The phosphorylation of phosphatidylinositol (PI) to PI4P is the first committed step in the generation of phosphatidylinositol 4,5-bisphosphate (PIP2), a precursor of the second messenger inositol 1,4,5-trisphosphate (InsP3). Undergoes autophosphorylation and phosphorylates serine/threonine residues of protein substrates. Phosphorylates RPN10 and UFD1 in vitro. The polypeptide is Phosphatidylinositol 4-kinase gamma 4 (Arabidopsis thaliana (Mouse-ear cress)).